Here is a 341-residue protein sequence, read N- to C-terminus: tRNA N6-adenosine threonylcarbamoyltransferase (341 aa).

Residues H115 and H119 each contribute to the Fe cation site. Substrate-binding positions include 138 to 142 (VVSGG), D171, G184, D188, and N279. D307 contributes to the Fe cation binding site.

It belongs to the KAE1 / TsaD family. It depends on Fe(2+) as a cofactor.

It is found in the cytoplasm. It catalyses the reaction L-threonylcarbamoyladenylate + adenosine(37) in tRNA = N(6)-L-threonylcarbamoyladenosine(37) in tRNA + AMP + H(+). In terms of biological role, required for the formation of a threonylcarbamoyl group on adenosine at position 37 (t(6)A37) in tRNAs that read codons beginning with adenine. Is involved in the transfer of the threonylcarbamoyl moiety of threonylcarbamoyl-AMP (TC-AMP) to the N6 group of A37, together with TsaE and TsaB. TsaD likely plays a direct catalytic role in this reaction. This Clostridium novyi (strain NT) protein is tRNA N6-adenosine threonylcarbamoyltransferase.